A 157-amino-acid polypeptide reads, in one-letter code: Ciliary microtubule inner protein 5 (157 aa).

2 disordered regions span residues 1–57 (MGSR…SALG) and 92–124 (DPMG…AVGS). Over residues 92–109 (DPMGNKKEPVKLPDHVPR) the composition is skewed to basic and acidic residues.

It localises to the cell projection. The protein localises to the cilium. The sequence is that of Ciliary microtubule inner protein 5 (CIMIP5) from Bos taurus (Bovine).